A 236-amino-acid polypeptide reads, in one-letter code: Probable methylthioribulose-1-phosphate dehydratase (236 aa).

The disordered stretch occupies residues 1–29 (MQNVQQPKKRKLSDEIIAEDEDYQRDPEH). C103 contributes to the substrate binding site. 3 residues coordinate Zn(2+): H121, H123, and H201.

Belongs to the aldolase class II family. MtnB subfamily. The cofactor is Zn(2+).

It localises to the cytoplasm. It carries out the reaction 5-(methylsulfanyl)-D-ribulose 1-phosphate = 5-methylsulfanyl-2,3-dioxopentyl phosphate + H2O. Its pathway is amino-acid biosynthesis; L-methionine biosynthesis via salvage pathway; L-methionine from S-methyl-5-thio-alpha-D-ribose 1-phosphate: step 2/6. Functionally, catalyzes the dehydration of methylthioribulose-1-phosphate (MTRu-1-P) into 2,3-diketo-5-methylthiopentyl-1-phosphate (DK-MTP-1-P). The protein is Probable methylthioribulose-1-phosphate dehydratase of Trichoplax adhaerens (Trichoplax reptans).